Reading from the N-terminus, the 423-residue chain is Keratin, type I cytoskeletal 18 (423 aa).

N-acetylserine is present on S2. The segment at 2–71 is head; that stretch reads SFTTRSTTFS…GLAGMGGVQT (70 aa). S7, S11, S16, and S19 each carry phosphoserine. A phosphoserine; alternate mark is found at S31 and S32. Residues S31 and S32 are each glycosylated (O-linked (GlcNAc) serine; alternate). Residue S35 is modified to Phosphoserine. Y37 is subject to Phosphotyrosine. The residue at position 43 (S43) is a Phosphoserine. At R46 the chain carries Omega-N-methylarginine. S50 carries the phosphoserine; alternate modification. The O-linked (GlcNAc) serine; alternate glycan is linked to S50. At S52 the chain carries Phosphoserine; by MAPKAPK2 and MAPKAPK3. S57 and S60 each carry phosphoserine. A necessary for interaction with PNN region spans residues 62-366; it reads GLAGMGGVQT…EALLNIKVKL (305 aa). Positions 69 to 121 are interaction with TRADD; the sequence is VQTEKETMQDLNDRLASYLDKVKNLETENRRLESKIREYLEKRGPQGVRDWGH. Residues 72–107 are coil 1A; the sequence is EKETMQDLNDRLASYLDKVKNLETENRRLESKIREY. One can recognise an IF rod domain in the interval 72 to 384; sequence EKETMQDLND…RLLEDGDDFS (313 aa). A Glycyl lysine isopeptide (Lys-Gly) (interchain with G-Cter in SUMO2) cross-link involves residue K73. S85 is modified (phosphoserine). A linker 1 region spans residues 108–125; it reads LEKRGPQGVRDWGHYFKT. K124 carries the post-translational modification N6-acetyllysine. The tract at residues 126-217 is coil 1B; sequence IEDLRAQIFA…KNHEEEVQGL (92 aa). A phosphoserine mark is found at S137 and S170. The tract at residues 218-241 is linker 12; it reads EAQIASSGLTVEVDAPKSQDLSKI. Positions 236–384 are interaction with DNAJB6; the sequence is QDLSKIMADI…RLLEDGDDFS (149 aa). K240 is covalently cross-linked (Glycyl lysine isopeptide (Lys-Gly) (interchain with G-Cter in SUMO2)). A coil 2 region spans residues 242-380; it reads MADIRAQYEQ…ATYRRLLEDG (139 aa). T295 is subject to Phosphothreonine. Residues K363 and K365 each participate in a glycyl lysine isopeptide (Lys-Gly) (interchain with G-Cter in SUMO2) cross-link. The tract at residues 381 to 423 is tail; that stretch reads DDFSLNDALDSSNSMQTVQRTTTRKVVDGKVVSETNDTRVLRH. 4 positions are modified to phosphoserine: S384, S391, S392, and S394. At T397 the chain carries Phosphothreonine. A Glycyl lysine isopeptide (Lys-Gly) (interchain with G-Cter in SUMO2) cross-link involves residue K410.

It belongs to the intermediate filament family. As to quaternary structure, heterotetramer of two type I and two type II keratins. KRT18 associates with KRT8. Interacts with PNN and mutated CFTR. Interacts with YWHAE, YWHAH and YWHAZ only when phosphorylated. Interacts with DNAJB6, TCHP and TRADD. Interacts with the thrombin-antithrombin complex. Interacts with FAM83H. Interacts with EPPK1. Interacts with PKP1 and PKP2. In terms of processing, phosphorylation increases by IL-6. Post-translationally, proteolytically cleaved by caspases during epithelial cell apoptosis. Cleavage occurs at Asp-231 by either caspase-3, caspase-6 or caspase-7. Dephosphorylated by ethanol. In terms of processing, O-GlcNAcylation increases solubility, and decreases stability by inducing proteasomal degradation. In terms of tissue distribution, expressed on the plasma membrane of hepatocytes and in the narrow apical portions of supporting cells in the vomeronasal sensory epithelium. Detected in the type III alveolar cells of the lung, in the proliferative crypt epithelium of the small intestine and in the older intragemmal cells of the tongue.

Its subcellular location is the nucleus matrix. The protein resides in the cytoplasm. It localises to the perinuclear region. The protein localises to the nucleus. It is found in the nucleolus. In terms of biological role, when phosphorylated, plays a role in filament reorganization. Involved in the delivery of mutated CFTR to the plasma membrane. Together with KRT8, is involved in interleukin-6 (IL-6)-mediated barrier protection. Involved in the uptake of thrombin-antithrombin complexes by hepatic cells. In Rattus norvegicus (Rat), this protein is Keratin, type I cytoskeletal 18.